We begin with the raw amino-acid sequence, 566 residues long: Sorting nexin lst-4 (566 aa).

One can recognise an SH3 domain in the interval 1–61 (MAQVKAEYDF…PESYVTPYQA (61 aa)). The segment at 59–179 (YQASRPPPVL…DRGSNKVNKN (121 aa)) is disordered. Pro residues predominate over residues 63–77 (RPPPVLPPPLPPTSS). Residues 127–140 (DDFDDEWTDEDDEQ) are compositionally biased toward acidic residues. Residues 143–154 (TRPNVQSSIGSN) show a composition bias toward polar residues. Over residues 155–173 (SRRDLSRSHSEHGGPDRGS) the composition is skewed to basic and acidic residues. One can recognise a PX domain in the interval 227-339 (YTCIVDKPKK…HFISCTDEKD (113 aa)). A BAR domain is found at 362–566 (TVPHQPLDPN…KLTSLAARYD (205 aa)).

It belongs to the sorting nexin family. In terms of assembly, homodimer. Isoform d interacts (via SH3 domain) with dyn-1. As to expression, expressed in vulval precursor cells (VPCs) and apoptotic germ cells. Colocalizes with actin, dyn-1 and rab-5 in early phagosomes.

It is found in the cytoplasm. The protein resides in the cytoplasmic vesicle. It localises to the phagosome membrane. In terms of biological role, involved in the signaling of vulval development by acting as a negative regulator of epidermal growth factor receptor (EGFR) signaling. Aids in phagosomal membrane tubule formation which is required for phagosomal fusion with endosomes and lysosomes. Also recruits rab-7 to phagosomes by an interaction with dyn-1. These are events leading to phagosome maturation which is a step in apoptotic cell corpse clearance. Binds phosphatidylinositol-3,4,5-trisphosphate. This is Sorting nexin lst-4 from Caenorhabditis elegans.